Here is a 279-residue protein sequence, read N- to C-terminus: Tryptophan 2,3-dioxygenase (279 aa).

Substrate contacts are provided by residues 48 to 52 (FIIQH), Tyr-110, and Arg-114. His-237 lines the heme pocket. Position 251 (Thr-251) interacts with substrate.

It belongs to the tryptophan 2,3-dioxygenase family. In terms of assembly, homotetramer. Requires heme as cofactor.

The enzyme catalyses L-tryptophan + O2 = N-formyl-L-kynurenine. Its pathway is amino-acid degradation; L-tryptophan degradation via kynurenine pathway; L-kynurenine from L-tryptophan: step 1/2. Its function is as follows. Heme-dependent dioxygenase that catalyzes the oxidative cleavage of the L-tryptophan (L-Trp) pyrrole ring and converts L-tryptophan to N-formyl-L-kynurenine. Catalyzes the oxidative cleavage of the indole moiety. This Ruegeria sp. (strain TM1040) (Silicibacter sp.) protein is Tryptophan 2,3-dioxygenase.